Reading from the N-terminus, the 417-residue chain is Tyrosine--tRNA ligase (417 aa).

Tyrosine 34 provides a ligand contact to L-tyrosine. A 'HIGH' region motif is present at residues 39 to 48 (PTAKSIHIGN). Tyrosine 165 and glutamine 169 together coordinate L-tyrosine. A 'KMSKS' region motif is present at residues 227–231 (KFGKS). Lysine 230 contacts ATP. Residues 349–416 (TDVVELLVKD…GKKKYFLAKV (68 aa)) enclose the S4 RNA-binding domain.

The protein belongs to the class-I aminoacyl-tRNA synthetase family. TyrS type 1 subfamily. Homodimer.

It localises to the cytoplasm. The catalysed reaction is tRNA(Tyr) + L-tyrosine + ATP = L-tyrosyl-tRNA(Tyr) + AMP + diphosphate + H(+). Catalyzes the attachment of tyrosine to tRNA(Tyr) in a two-step reaction: tyrosine is first activated by ATP to form Tyr-AMP and then transferred to the acceptor end of tRNA(Tyr). The protein is Tyrosine--tRNA ligase of Oenococcus oeni (strain ATCC BAA-331 / PSU-1).